We begin with the raw amino-acid sequence, 1031 residues long: MTAFSEILQRRDWENPQSVNIHCLKAHSPLASFRDMAHARDGIHAQRQSLNGQWKFKLFDAPEQVDGQFTQADFNDAEWDEIPVPSNWQLHGYDKPIYANIKYPFDVNPPFVPRENPTGCYRTRVSLSPEDLLNTQRIIFDGVNSAFHLWCNGTWVGYSQDSRLPAEFDLTSHLVAGENTLAVMVMRWCDGSYLEDQDMWWLSGIFRDVTLLSKPQHCIEDVFITPDLDACYRDGSLSIVTTIAAPETYQVQVQLFEGTQAVTEPNIDRPHNRRIDERGTWNDVVFQTLHLREPKKWTAETPNLYRLVVSLLDENGTHLESEAYPVGFRKVEISEGQLKLNGKPLLIRGVNRHEHHPELGHVMTEEDMIRDICLMKQYNFNAVRTAHYPNHPRWYELCDQYGLYVCDEANIETHGMQPMSRLSSDPQWAHAYMSRYTQMVLRDKNHPSIIIWSLGNESGHGSNHNAMYAWSKNFDPSRPVQYEGGGSNTTATDIIAPMYARVNTLIADEAVPKWPIKKWISLPNETRPLILCEYAHAMGNSLGSFDEYWAAFREFPRLQGGFIWDWVDQGLSQWDENGQHFWAYGGDFGDEINDRQFCINGLIFPDRTVHPTLQEAKYCQRMITVSLQEQTQKACTLLVTNENLFRATDNEQLNWSLLENGQVIQTGSLALSVEADSQTRLEIALNFTPKAQAQYHLNTDICLIEATSWAPAGHVVATEQMALRNHAGLAIPTLRTQPAPKLTQDGHAIVVSSLDEKHQWRWDSQSGLLMEWNVDGKAQMLAAPQDNFFRAPLDNDIGISEVDNVDPNAWVCRWEMAGIGQWERHCVHCDSETLAHTVVVTTTFAYHFGGDVQAITQWTHTLSNDGEMLLDVDVTLADTLPPMPRIGLELQLPLYQADTPITWQGLGPFENYPDRLAAARFGLHTQTLAQMHTPYIFPTDSGLRCGTQWLQVNELAISGDFQFSVSQYAQQQLAEAKHTHDLLAQERIYLRLDHQHMGVGGDDSWSPSVHKEFQLTEKHYRYQLRFKPASR.

Positions 100 and 198 each coordinate substrate. Aspartate 198 is a binding site for Na(+). The Mg(2+) site is built by glutamate 412, histidine 414, and glutamate 457. Substrate-binding positions include glutamate 457 and 533 to 536 (EYAH). The active-site Proton donor is the glutamate 457. Glutamate 533 acts as the Nucleophile in catalysis. Residue asparagine 593 participates in Mg(2+) binding. 2 residues coordinate Na(+): phenylalanine 597 and asparagine 600. Substrate-binding residues include asparagine 600 and tryptophan 1005.

The protein belongs to the glycosyl hydrolase 2 family. As to quaternary structure, homotetramer. Mg(2+) serves as cofactor. The cofactor is Na(+).

It catalyses the reaction Hydrolysis of terminal non-reducing beta-D-galactose residues in beta-D-galactosides.. The chain is Beta-galactosidase from Vibrio vulnificus (strain YJ016).